We begin with the raw amino-acid sequence, 291 residues long: N-acetylmannosamine kinase (291 aa).

Residues 5–12 (AIDIGGTK) and 132–139 (GVGGGVVC) each bind ATP. Residues H156, C166, C168, and C173 each coordinate Zn(2+).

Belongs to the ROK (NagC/XylR) family. NanK subfamily. In terms of assembly, homodimer.

The enzyme catalyses an N-acyl-D-mannosamine + ATP = an N-acyl-D-mannosamine 6-phosphate + ADP + H(+). The protein operates within amino-sugar metabolism; N-acetylneuraminate degradation; D-fructose 6-phosphate from N-acetylneuraminate: step 2/5. Functionally, catalyzes the phosphorylation of N-acetylmannosamine (ManNAc) to ManNAc-6-P. The chain is N-acetylmannosamine kinase from Salmonella gallinarum (strain 287/91 / NCTC 13346).